A 488-amino-acid chain; its full sequence is MAYSQGGGKKKVCYYYDGDIGNYYYGQGHPMKPHRIRMTHNLLLNYGLYRKMEIYRPHKATAEEMTKYHSDEYIKFLRSIRPDNMSEYSKQMQRFNVGEDCPVFDGLFEFCQLSTGGSVAGAVKLNRQQTDMAVNWAGGLHHAKKSEASGFCYVNDIVLAILELLKYHQRVLYIDIDIHHGDGVEEAFYTTDRVMTVSEVSMVNNFPGTGDLRDIGAGKGKYYAVNFPMRDGIDDESYGQIFKPIISKVMEMYQPSAVVLQCGADSLSGDRLGCFNLTVKGHAKCVEVVKTFNLPLLMLGGGGYTIRNVARCWTYETAVALDCEIPNELPYNDYFEYFGPDFKLHISPSNMTNQNTPEYMEKIKQRLFENLRMLPHAPGVQMQAIPEDAVHEDSGDEDGEDPDKRISIRASDKRIACDEEFSDSEDEGEGGRRNVADHKKGAKKARIEEDKKETEDKKADVKEEDKSKDNSGEKTDTKGAKSEQLSNP.

The interval 9–322 is histone deacetylase; it reads KKKVCYYYDG…WTYETAVALD (314 aa). Residues glycine 28 and lysine 32 each contribute to the 1D-myo-inositol 1,4,5,6-tetrakisphosphate site. Residue histidine 142 is part of the active site. Residues aspartate 177, histidine 179, and aspartate 265 each contribute to the Zn(2+) site. Arginine 271 contacts 1D-myo-inositol 1,4,5,6-tetrakisphosphate. The interval 389-488 is disordered; it reads AVHEDSGDED…GAKSEQLSNP (100 aa). The span at 402 to 417 shows a compositional bias: basic and acidic residues; it reads PDKRISIRASDKRIAC. Over residues 418 to 428 the composition is skewed to acidic residues; sequence DEEFSDSEDEG. Basic and acidic residues predominate over residues 429–481; the sequence is EGGRRNVADHKKGAKKARIEEDKKETEDKKADVKEEDKSKDNSGEKTDTKGAK.

This sequence belongs to the histone deacetylase family. HD type 1 subfamily. The cofactor is Zn(2+).

It localises to the nucleus. The protein localises to the cytoplasm. The catalysed reaction is N(6)-acetyl-L-lysyl-[histone] + H2O = L-lysyl-[histone] + acetate. It carries out the reaction N(6)-acetyl-L-lysyl-[protein] + H2O = L-lysyl-[protein] + acetate. It catalyses the reaction N(6)-(2E)-butenoyl-L-lysyl-[protein] + H2O = (2E)-2-butenoate + L-lysyl-[protein]. The enzyme catalyses N(6)-(2-hydroxyisobutanoyl)-L-lysyl-[protein] + H2O = 2-hydroxy-2-methylpropanoate + L-lysyl-[protein]. The catalysed reaction is N(6)-[(S)-lactoyl]-L-lysyl-[protein] + H2O = (S)-lactate + L-lysyl-[protein]. Its activity is regulated as follows. Inositol tetraphosphate (1D-myo-inositol 1,4,5,6-tetrakisphosphate) may act as an intermolecular glue between HDAC2 and N-Cor repressor complex components. Histone deacetylase that catalyzes the deacetylation of lysine residues on the N-terminal part of the core histones (H2A, H2B, H3 and H4). Histone deacetylation gives a tag for epigenetic repression and plays an important role in transcriptional regulation, cell cycle progression and developmental events. Histone deacetylases act via the formation of large multiprotein complexes. Also deacetylates non-histone proteins. In addition to protein deacetylase activity, also acts as a protein-lysine deacylase by recognizing other acyl groups: catalyzes removal of (2E)-butenoyl (crotonyl), lactoyl (lactyl) and 2-hydroxyisobutanoyl (2-hydroxyisobutyryl) acyl groups from lysine residues, leading to protein decrotonylation, delactylation and de-2-hydroxyisobutyrylation, respectively. The polypeptide is Histone deacetylase 2 (HDAC2) (Gallus gallus (Chicken)).